Reading from the N-terminus, the 515-residue chain is GMP synthase [glutamine-hydrolyzing] (515 aa).

One can recognise a Glutamine amidotransferase type-1 domain in the interval 10-200 (TIIVLDFGSQ…VFGVCGCSEG (191 aa)). C87 (nucleophile) is an active-site residue. Catalysis depends on residues H174 and E176. The 190-residue stretch at 201–390 (WNMENFIEVE…LGIPDEIVWR (190 aa)) folds into the GMPS ATP-PPase domain. 228 to 234 (SGGVDSS) serves as a coordination point for ATP.

As to quaternary structure, homodimer.

The catalysed reaction is XMP + L-glutamine + ATP + H2O = GMP + L-glutamate + AMP + diphosphate + 2 H(+). It participates in purine metabolism; GMP biosynthesis; GMP from XMP (L-Gln route): step 1/1. Its function is as follows. Catalyzes the synthesis of GMP from XMP. In Bacillus thuringiensis subsp. konkukian (strain 97-27), this protein is GMP synthase [glutamine-hydrolyzing].